The sequence spans 245 residues: Thiopurine S-methyltransferase (245 aa).

At serine 14 the chain carries Phosphoserine. Residue 29-40 (WQGKWVTGKTIF) coordinates S-adenosyl-L-methionine. Phenylalanine 40 is a binding site for substrate. Lysine 58 bears the N6-acetyllysine mark. S-adenosyl-L-methionine-binding residues include leucine 69, glutamate 90, and arginine 152.

It belongs to the class I-like SAM-binding methyltransferase superfamily. TPMT family. As to quaternary structure, monomer.

Its subcellular location is the cytoplasm. The catalysed reaction is S-adenosyl-L-methionine + a thiopurine = S-adenosyl-L-homocysteine + a thiopurine S-methylether.. The chain is Thiopurine S-methyltransferase (TPMT) from Equus caballus (Horse).